The primary structure comprises 1218 residues: DNA polymerase subunit gamma-1 (1218 aa).

A disordered region spans residues 31–50 (LDPVPSDGRPPSQMPSSENG). The short motif at 179–183 (VFDVE) is the Exo I element. The active-site Exonuclease activity is the Asp-181. An Exo II motif is present at residues 250-258 (VGHNVSFDR). Residue Ser-289 participates in DNA binding. An Exo III motif is present at residues 378–386 (YCARDVWAT). The interval 484 to 524 (KKVKKPASASKLPIEGAGPFGDPMDQEDPGPPSEEEELQRS) is disordered. The segment at 492-553 (ASKLPIEGAG…RPQHLPGHPG (62 aa)) is accessory-interacting determinant. Acidic residues predominate over residues 507-520 (MDQEDPGPPSEEEE). Residue Arg-561 participates in RNA binding. A DNA-binding site is contributed by Ser-575. 3 residues coordinate RNA: His-733, Gly-742, and Lys-747. The DNA site is built by Lys-785 and Thr-828. A trigger loop region spans residues 837-843 (TWLTASN). Ser-842 and Arg-848 together coordinate RNA. Positions 866-875 (VGADVDSQEL) match the Pol A motif. The a 2'-deoxyribonucleoside 5'-triphosphate site is built by Asp-869, Val-870, Ser-872, Glu-874, Arg-922, Lys-926, and Tyr-930. Residues Asp-869 and Val-870 each contribute to the Mg(2+) site. A Pol B motif is present at residues 922-937 (REHAKIFNYGRIYGAG). DNA contacts are provided by Thr-1073 and Ser-1074. The Pol C signature appears at 1113 to 1120 (HDEVRYLV). Residue Asp-1114 coordinates a 2'-deoxyribonucleoside 5'-triphosphate. Asp-1114 is a Mg(2+) binding site.

The protein belongs to the DNA polymerase type-A family. Heterotrimer composed of a catalytic subunit and a homodimer of accessory subunits (POLG:POLG2). Interacts with TTC3. Interacts with LIG3. Requires Mg(2+) as cofactor.

It is found in the mitochondrion. The protein resides in the mitochondrion matrix. Its subcellular location is the mitochondrion nucleoid. It carries out the reaction DNA(n) + a 2'-deoxyribonucleoside 5'-triphosphate = DNA(n+1) + diphosphate. The catalysed reaction is a 3'-end 2'-deoxyribonucleotidyl-deoxyribonucleotide-DNA + H2O = a 3'-end 2'-deoxyribonucleotide-DNA + a 2'-deoxyribonucleoside 5'-phosphate + H(+). The enzyme catalyses a 5'-end 2'-deoxyribose-2'-deoxyribonucleotide-DNA = (2E,4S)-4-hydroxypenten-2-al-5-phosphate + a 5'-end 5'-phospho-2'-deoxyribonucleoside-DNA + H(+). Its activity is regulated as follows. Inhibited by dideoxynucleotides such as antiviral agent zalcitabine. Functionally, catalytic subunit of DNA polymerase gamma solely responsible for replication of mitochondrial DNA (mtDNA). Replicates both heavy and light strands of the circular mtDNA genome using a single-stranded DNA template, RNA primers and the four deoxyribonucleoside triphosphates as substrates. Has 5' -&gt; 3' polymerase activity. Functionally interacts with TWNK and SSBP1 at the replication fork to form a highly processive replisome, where TWNK unwinds the double-stranded DNA template prior to replication and SSBP1 covers the parental heavy strand to enable continuous replication of the entire mitochondrial genome. A single nucleotide incorporation cycle includes binding of the incoming nucleotide at the insertion site, a phosphodiester bond formation reaction that extends the 3'-end of the primer DNA, and translocation of the primer terminus to the post-insertion site. After completing replication of a mtDNA strand, mediates 3' -&gt; 5' exonucleolytic degradation at the nick to enable proper ligation. Highly accurate due to high nucleotide selectivity and 3' -&gt; 5' exonucleolytic proofreading. Proficiently corrects base substitutions, single-base additions and deletions in non-repetitive sequences and short repeats, but displays lower proofreading activity when replicating longer homopolymeric stretches. Exerts exonuclease activity toward single-stranded DNA and double-stranded DNA containing 3'-terminal mispairs. When a misincorporation occurs, transitions from replication to a pro-nucleolytic editing mode and removes the missincorporated nucleoside in the exonuclease active site. Proceeds via an SN2 nucleolytic mechanism in which Asp-198 catalyzes phosphodiester bond hydrolysis and Glu-200 stabilizes the leaving group. As a result the primer strand becomes one nucleotide shorter and is positioned in the post-insertion site, ready to resume DNA synthesis. Exerts 5'-deoxyribose phosphate (dRP) lyase activity and mediates repair-associated mtDNA synthesis (gap filling) in base-excision repair pathway. Catalyzes the release of the 5'-terminal 2-deoxyribose-5-phosphate sugar moiety from incised apurinic/apyrimidinic (AP) sites to produce a substrate for DNA ligase. The dRP lyase reaction does not require divalent metal ions and likely proceeds via a Schiff base intermediate in a beta-elimination reaction mechanism. The chain is DNA polymerase subunit gamma-1 from Mus musculus (Mouse).